A 242-amino-acid polypeptide reads, in one-letter code: Biosynthetic peptidoglycan transglycosylase (242 aa).

The chain crosses the membrane as a helical span at residues 19 to 39 (ILVVLAVFWGGGIALFSVVPV).

It belongs to the glycosyltransferase 51 family.

The protein resides in the cell inner membrane. It carries out the reaction [GlcNAc-(1-&gt;4)-Mur2Ac(oyl-L-Ala-gamma-D-Glu-L-Lys-D-Ala-D-Ala)](n)-di-trans,octa-cis-undecaprenyl diphosphate + beta-D-GlcNAc-(1-&gt;4)-Mur2Ac(oyl-L-Ala-gamma-D-Glu-L-Lys-D-Ala-D-Ala)-di-trans,octa-cis-undecaprenyl diphosphate = [GlcNAc-(1-&gt;4)-Mur2Ac(oyl-L-Ala-gamma-D-Glu-L-Lys-D-Ala-D-Ala)](n+1)-di-trans,octa-cis-undecaprenyl diphosphate + di-trans,octa-cis-undecaprenyl diphosphate + H(+). It functions in the pathway cell wall biogenesis; peptidoglycan biosynthesis. Peptidoglycan polymerase that catalyzes glycan chain elongation from lipid-linked precursors. The polypeptide is Biosynthetic peptidoglycan transglycosylase (Citrobacter koseri (strain ATCC BAA-895 / CDC 4225-83 / SGSC4696)).